Reading from the N-terminus, the 318-residue chain is 4-hydroxy-3-methylbut-2-enyl diphosphate reductase (318 aa).

Cys12 is a binding site for [4Fe-4S] cluster. The (2E)-4-hydroxy-3-methylbut-2-enyl diphosphate site is built by His41 and His74. 2 residues coordinate dimethylallyl diphosphate: His41 and His74. Residues His41 and His74 each contribute to the isopentenyl diphosphate site. Cys96 is a binding site for [4Fe-4S] cluster. His124 provides a ligand contact to (2E)-4-hydroxy-3-methylbut-2-enyl diphosphate. Residue His124 coordinates dimethylallyl diphosphate. Isopentenyl diphosphate is bound at residue His124. The active-site Proton donor is the Glu126. Thr167 serves as a coordination point for (2E)-4-hydroxy-3-methylbut-2-enyl diphosphate. Residue Cys197 coordinates [4Fe-4S] cluster. (2E)-4-hydroxy-3-methylbut-2-enyl diphosphate-binding residues include Ser225, Ser226, Asn227, and Ser269. Dimethylallyl diphosphate-binding residues include Ser225, Ser226, Asn227, and Ser269. Isopentenyl diphosphate contacts are provided by Ser225, Ser226, Asn227, and Ser269.

The protein belongs to the IspH family. [4Fe-4S] cluster is required as a cofactor.

The enzyme catalyses isopentenyl diphosphate + 2 oxidized [2Fe-2S]-[ferredoxin] + H2O = (2E)-4-hydroxy-3-methylbut-2-enyl diphosphate + 2 reduced [2Fe-2S]-[ferredoxin] + 2 H(+). It catalyses the reaction dimethylallyl diphosphate + 2 oxidized [2Fe-2S]-[ferredoxin] + H2O = (2E)-4-hydroxy-3-methylbut-2-enyl diphosphate + 2 reduced [2Fe-2S]-[ferredoxin] + 2 H(+). It functions in the pathway isoprenoid biosynthesis; dimethylallyl diphosphate biosynthesis; dimethylallyl diphosphate from (2E)-4-hydroxy-3-methylbutenyl diphosphate: step 1/1. Its pathway is isoprenoid biosynthesis; isopentenyl diphosphate biosynthesis via DXP pathway; isopentenyl diphosphate from 1-deoxy-D-xylulose 5-phosphate: step 6/6. Catalyzes the conversion of 1-hydroxy-2-methyl-2-(E)-butenyl 4-diphosphate (HMBPP) into a mixture of isopentenyl diphosphate (IPP) and dimethylallyl diphosphate (DMAPP). Acts in the terminal step of the DOXP/MEP pathway for isoprenoid precursor biosynthesis. This is 4-hydroxy-3-methylbut-2-enyl diphosphate reductase from Francisella philomiragia subsp. philomiragia (strain ATCC 25017 / CCUG 19701 / FSC 153 / O#319-036).